We begin with the raw amino-acid sequence, 260 residues long: Multiple myeloma tumor-associated protein 2 homolog (260 aa).

Residues 1–11 are compositionally biased toward gly residues; it reads MFGSNRGGVRG. Residues 1–21 are disordered; the sequence is MFGSNRGGVRGGQDQFNWEDV. Residues Lys-22, Lys-104, and Lys-113 each participate in a glycyl lysine isopeptide (Lys-Gly) (interchain with G-Cter in SUMO2) cross-link. Positions 106–116 are enriched in basic and acidic residues; it reads EGGDPEEKGVD. Disordered stretches follow at residues 106–133 and 146–260; these read EGGD…RVAL and SVFT…SSDD. Residues 117 to 132 are compositionally biased toward low complexity; sequence RLLGLGSASGSAGRVA. Phosphoserine occurs at positions 123 and 127. The span at 170-182 shows a compositional bias: basic and acidic residues; it reads RAEDKVEPDAESH. Positions 183–206 are enriched in basic residues; that stretch reads KKSKKEKKKKKKKHKKHKKKKDKE. A phosphoserine mark is found at Ser-215, Ser-216, and Ser-219.

The chain is Multiple myeloma tumor-associated protein 2 homolog (Mmtag2) from Mus musculus (Mouse).